A 248-amino-acid polypeptide reads, in one-letter code: Coproheme decarboxylase (248 aa).

Fe-coproporphyrin III is bound by residues Arg130, 144 to 148, His171, Gln184, and Ser222; that span reads YPMDK. The active site involves Tyr144.

Belongs to the ChdC family. Type 1 subfamily. Fe-coproporphyrin III serves as cofactor.

The catalysed reaction is Fe-coproporphyrin III + 2 H2O2 + 2 H(+) = heme b + 2 CO2 + 4 H2O. It catalyses the reaction Fe-coproporphyrin III + H2O2 + H(+) = harderoheme III + CO2 + 2 H2O. It carries out the reaction harderoheme III + H2O2 + H(+) = heme b + CO2 + 2 H2O. It participates in porphyrin-containing compound metabolism; protoheme biosynthesis. In terms of biological role, involved in coproporphyrin-dependent heme b biosynthesis. Catalyzes the decarboxylation of Fe-coproporphyrin III (coproheme) to heme b (protoheme IX), the last step of the pathway. The reaction occurs in a stepwise manner with a three-propionate intermediate. This Geobacillus sp. (strain WCH70) protein is Coproheme decarboxylase.